Here is a 345-residue protein sequence, read N- to C-terminus: MLTPRAEIILRSIVRQYITKAVPVSSSSILEDCGLDICSATIRNEVVRLETEGYILRPHHSAGSIPADKGYRYYVESLKDVELPTNDKFLIRHLFHQVEKEMEEWLNLTVAVLSQRVQSMAVVTMPRQTQGKVHHIELVSLQDNLVLVVLILRGAKVKQQLINFENTVSQPELTLISNRLNDAYAGLTRFQIEQKTLNLNPDELKVKDSLIKMMRGEDEQESREPFFDGLHYMLEQPEFHQNQRVQEIMQLLEQKKLSKMIAPPSPFNRGVQVYIGQENASAEIRDYSLIVSQYGIPDEAVGTIGVIGPTRMAYERALSAVSYLSLVMSTLVAELYGKPPGGKDE.

It belongs to the HrcA family.

Functionally, negative regulator of class I heat shock genes (grpE-dnaK-dnaJ and groELS operons). Prevents heat-shock induction of these operons. The protein is Heat-inducible transcription repressor HrcA of Dehalococcoides mccartyi (strain ATCC BAA-2266 / KCTC 15142 / 195) (Dehalococcoides ethenogenes (strain 195)).